Consider the following 338-residue polypeptide: Arginine N-succinyltransferase subunit alpha (338 aa).

The protein belongs to the succinylarginine dihydrolase family. In terms of assembly, heterotetramer of two alpha and two beta subunits.

The catalysed reaction is succinyl-CoA + L-arginine = N(2)-succinyl-L-arginine + CoA + H(+). It participates in amino-acid degradation; L-arginine degradation via AST pathway; L-glutamate and succinate from L-arginine: step 1/5. Functionally, catalyzes the transfer of succinyl-CoA to arginine to produce N(2)-succinylarginine. Also acts on L-ornithine. This is Arginine N-succinyltransferase subunit alpha (astA) from Pseudomonas aeruginosa (strain ATCC 15692 / DSM 22644 / CIP 104116 / JCM 14847 / LMG 12228 / 1C / PRS 101 / PAO1).